We begin with the raw amino-acid sequence, 244 residues long: Gamma-gliadin (244 aa).

The disordered stretch occupies residues Q18–Q64. Residues V35 to P48 are compositionally biased toward polar residues.

The protein belongs to the gliadin/glutenin family.

In terms of biological role, gliadin is the major seed storage protein in wheat. The polypeptide is Gamma-gliadin (Triticum aestivum (Wheat)).